Reading from the N-terminus, the 779-residue chain is Polyribonucleotide nucleotidyltransferase (779 aa).

Residues D490 and D496 each contribute to the Mg(2+) site. The KH domain occupies 557 to 618 (PHILSLKINP…EAVKARIEAV (62 aa)). The S1 motif domain occupies 625–693 (GEEFEGTVVK…DRGKIDLIRP (69 aa)). A compositionally biased stretch (basic and acidic residues) spans 699–752 (VPLREPRAPRGGDRGPRRDSDRGGDRGPRREFSDRGPRPEGARSERPEGQRTER). The interval 699 to 779 (VPLREPRAPR…AAPVFPRRED (81 aa)) is disordered. Residues 757–767 (PATQESSQSSD) are compositionally biased toward polar residues.

This sequence belongs to the polyribonucleotide nucleotidyltransferase family. Requires Mg(2+) as cofactor.

The protein resides in the cytoplasm. It carries out the reaction RNA(n+1) + phosphate = RNA(n) + a ribonucleoside 5'-diphosphate. In terms of biological role, involved in mRNA degradation. Catalyzes the phosphorolysis of single-stranded polyribonucleotides processively in the 3'- to 5'-direction. The protein is Polyribonucleotide nucleotidyltransferase of Deinococcus radiodurans (strain ATCC 13939 / DSM 20539 / JCM 16871 / CCUG 27074 / LMG 4051 / NBRC 15346 / NCIMB 9279 / VKM B-1422 / R1).